The primary structure comprises 57 residues: Neurotoxin Oh9-1 (57 aa).

Cystine bridges form between C3/C19, C12/C37, C41/C49, and C50/C55.

Belongs to the three-finger toxin family. Short-chain subfamily. As to expression, expressed by the venom gland.

It is found in the secreted. Its function is as follows. This toxin binds and inhibits rat muscle adult alpha-1-beta-1-delta-epsilon/CHRNA1-CHRNB1-CHRND-CHRNE (IC(50)=3.1 uM) and fetal alpha-1-beta-1-gamma-delta/CHRNA1-CHRNB1-CHRNG-CHRND (IC(50)=5.6 uM) nicotinic acetylcholine receptors (nAChR). Shows a very low inhibition on rat neuronal alpha-3-beta-2/CHRNA3-CHRNB2 nAChR (IC(50)=50.2 uM) nAChR. Binds to the acetylcholine-binding pocket and acts as a competitive antagonist. Does not inhibit human glycine receptor (homopentamer composed of alpha-1 subunits, GLRA1), but seems to potentiate it (about 2-fold increased activity). This is Neurotoxin Oh9-1 from Ophiophagus hannah (King cobra).